The chain runs to 269 residues: Formamidopyrimidine-DNA glycosylase (269 aa).

Proline 2 serves as the catalytic Schiff-base intermediate with DNA. Glutamate 3 (proton donor) is an active-site residue. Lysine 57 (proton donor; for beta-elimination activity) is an active-site residue. DNA contacts are provided by histidine 90, arginine 109, and lysine 150. The FPG-type zinc-finger motif lies at 235-269 (QVYGRAGEPCRQCGHPIEIAKHGQRSTFFCRHCQH). Arginine 259 functions as the Proton donor; for delta-elimination activity in the catalytic mechanism.

It belongs to the FPG family. In terms of assembly, monomer. The cofactor is Zn(2+).

The catalysed reaction is Hydrolysis of DNA containing ring-opened 7-methylguanine residues, releasing 2,6-diamino-4-hydroxy-5-(N-methyl)formamidopyrimidine.. The enzyme catalyses 2'-deoxyribonucleotide-(2'-deoxyribose 5'-phosphate)-2'-deoxyribonucleotide-DNA = a 3'-end 2'-deoxyribonucleotide-(2,3-dehydro-2,3-deoxyribose 5'-phosphate)-DNA + a 5'-end 5'-phospho-2'-deoxyribonucleoside-DNA + H(+). In terms of biological role, involved in base excision repair of DNA damaged by oxidation or by mutagenic agents. Acts as a DNA glycosylase that recognizes and removes damaged bases. Has a preference for oxidized purines, such as 7,8-dihydro-8-oxoguanine (8-oxoG). Has AP (apurinic/apyrimidinic) lyase activity and introduces nicks in the DNA strand. Cleaves the DNA backbone by beta-delta elimination to generate a single-strand break at the site of the removed base with both 3'- and 5'-phosphates. The polypeptide is Formamidopyrimidine-DNA glycosylase (Yersinia pseudotuberculosis serotype O:1b (strain IP 31758)).